Here is a 1748-residue protein sequence, read N- to C-terminus: MTSKPSTRNDYLPRETHNGEYTGDSPEWQLQINITNKIGGINGDIWLSRDGRSVKWCIEDQCLRQFTYNQKIIKAGYIDFEKTPDCFVVVLSDIAHVYMLKNGGSTTVCFPFQIGNAFWYANGVILERETSASFMDGGYDLKPIEFDLKHKYITLTDPMAPFGLISITNTFKGGINSASGNKTDILQDFQLVLFPSDKDKCIAVFLDRNSKVLRFYYSRILSSDQSRKGELTISSTKKTGLDAAGNSQKSGGISKDLRKFSHLTRRSTSINSNSHDFNAAERVLSGNVGNASGRTDIFALPSSCSRRSLSATLDRMGNNIAPTNRAAPSGFFDSSSANTATHSNITPVSQPMQQQQQEYLNQTATSSKDIVLTEISSLKLPDDIIFTSRRLSSILSKLKFLSLRFERREGLLIFHEPTHFCKIWLIDLLPDVLDSIPFKIYGNSPQNMIRLENLKLKEPSRIQAMYIHELLESCLILVSEGQNKEEYKACLYDPFVKITSPSKNISEELTKQNSLPSLQKLFPYPETSFTKLCFEAVKYITSPAFNISFIFLWQSAYSILLSRANDDVVGGLKMEHDAFSLVLSLLILPIPSSSAQEYQEYKEIYERDLFQHLKQDSEITSSVLPRIVIGLHLIREEYSLNVLCRNEHALLGQFLRFATAAMGWPDLWQSYYVPKMDSESKTFLHPREQNSTFFHPLDEPPSITKSLYSITENSSIPLCPFISFSRLVATDTQVELRITPRSFKILGLYELVHSPNFLPDYVLGILSSFKVDKDELQTYPLGILVPLQNILKILEDKLSEVRDNLELLDRADLQRCSAIINSIRSDSKEVLKRGQRDSYMLCKVPLAKNRSSLSKKPSDIYSILSEIVKSASQVPLDGSAMRMSNIQDDEDIDEGRSLKLNAGLIFSEDKRFTHVVSLLAYYRPTKTQFFTTKTEYAQILAQKKYFAKIMALRTCTNGVGWGAVAYATEKPISTQKWVIQPLNLISVFPDDTKITVKAPEDIAHDIVEWGQFHAGVSSGLRISKKATGITGSWIAFNKPKELDAYHGGFLLGLGLNGHLKNLEEWHIYNYLSPRNTHISIGLLLGMSSSMKGSMDSKLIKVISVHLVAFLPSGSSDLNIDLKLQTAGIIGMGMLYLNSRHKRMSDSIFAQLVSLLNVNDEMVADEEYRLAAGISLGLINLGAGQTKLRKWDSSLLGLGDDLPEDVYDSSDVEQNVMYEDLTTKLLEIVTSTYDVENDWIPENSQIGAVIAIMFLFLKSNNFGISNMLKVDLKEILKANINTRPELLMYREWASNMILWEFIGDDLSFIMKDVDIGVKFSELNTDLLPIYYTMAGRILAMGIRFASTGNLKIRNILLSLVDKFLPLYQYPGKQNLDFRLTISVINVLTNVIVVSLSMVMCASGDLEVLRRVKYLHEVASGPYSDLFQEIPSSKSDVSGVTQVTSNTNTPGNSDRERVDETAASLDDERSSNGSDISDPTAYLEDKKDIDDHYGKFISTNLALGFLFLGSGQYALNTSTLESIAFLSMSVLPTYTTPHPLQELKHFWSMAVEPRCLVIKDISTGDAVNNVPIELVVEEDVEKEEVIREISTPCLLPDFSKIKSIRVKMHGYFPLEVNFTKDYSASDFFSGGTIIYIQRKSESVFENKASFRNVEDIHVALKRKAAESKNYSRLNLKNEQGNTTSSQLVESLGIQDLTMVELDTLLSAGNNTALTDSESYNLGLLCSDKNSGDILDCQLELWYKSFGPHDE.

2 disordered regions span residues 1–24 (MTSK…YTGD) and 1435–1479 (VSGV…DPTA). The span at 1435–1450 (VSGVTQVTSNTNTPGN) shows a compositional bias: polar residues. The span at 1451 to 1468 (SDRERVDETAASLDDERS) shows a compositional bias: basic and acidic residues. The residue at position 1462 (Ser1462) is a Phosphoserine.

Belongs to the APC1 family. As to quaternary structure, the APC/C is composed of at least 13 subunits that stay tightly associated throughout the cell cycle: APC1, APC2, APC4, APC5, APC9, APC11, CDC16, CDC23, CDC26, CDC27, DOC1, MND2 and SWM1. APC1 interacts directly with MND2.

The protein resides in the nucleus. It localises to the cytoplasm. It is found in the cytoskeleton. Its subcellular location is the spindle pole. Its pathway is protein modification; protein ubiquitination. Functionally, component of the anaphase promoting complex/cyclosome (APC/C), a cell cycle-regulated E3 ubiquitin-protein ligase complex that controls progression through mitosis and the G1 phase of the cell cycle. The APC/C is thought to confer substrate specificity and, in the presence of ubiquitin-conjugating E2 enzymes, it catalyzes the formation of protein-ubiquitin conjugates that are subsequently degraded by the 26S proteasome. In early mitosis, the APC/C is activated by CDC20 and targets securin PDS1, the B-type cyclin CLB5, and other anaphase inhibitory proteins for proteolysis, thereby triggering the separation of sister chromatids at the metaphase-to-anaphase transition. In late mitosis and in G1, degradation of CLB5 allows activation of the APC/C by CDH1, which is needed to destroy CDC20 and the B-type cyclin CLB2 to allow exit from mitosis and creating the low CDK state necessary for cytokinesis and for reforming prereplicative complexes in G1 prior to another round of replication. The protein is Anaphase-promoting complex subunit 1 (APC1) of Saccharomyces cerevisiae (strain ATCC 204508 / S288c) (Baker's yeast).